Reading from the N-terminus, the 151-residue chain is Transcription antitermination protein NusB (151 aa).

Belongs to the NusB family.

Involved in transcription antitermination. Required for transcription of ribosomal RNA (rRNA) genes. Binds specifically to the boxA antiterminator sequence of the ribosomal RNA (rrn) operons. The chain is Transcription antitermination protein NusB from Hamiltonella defensa subsp. Acyrthosiphon pisum (strain 5AT).